The chain runs to 979 residues: Ankycorbin (979 aa).

An N-acetylmethionine modification is found at Met-1. Ser-11 is modified (phosphoserine). ANK repeat units lie at residues 18–51 (KNDD…KHDS), 52–81 (EGKT…DVTA), 85–114 (SGHS…PAEN), 118–147 (SGKT…PINL), 151–180 (DGNI…DVNS), 184–213 (NGRT…DLSL), and 217–247 (LGHN…DADL). Basic and acidic residues predominate over residues 247 to 259 (LKTPTKPKQHDQV). Positions 247–299 (LKTPTKPKQHDQVSKISSERSGTPKKRKAPPPPISPTQLSDVSSPRSITSTPL) are disordered. Position 249 is a phosphothreonine (Thr-249). The Nuclear localization signal signature appears at 270 to 276 (PKKRKAP). Residues Ser-281, Ser-286, and Ser-293 each carry the phosphoserine modification. The span at 282–299 (PTQLSDVSSPRSITSTPL) shows a compositional bias: polar residues. Residues Thr-295 and Thr-297 each carry the phosphothreonine modification. Phosphoserine is present on residues Ser-300, Ser-304, Ser-318, Ser-327, Ser-329, Ser-340, Ser-341, and Ser-358. Positions 349–374 (LVLLQAKVASLTLHNKELQDKLQAKS) form a coiled coil. 2 disordered regions span residues 392–429 (TQTD…TDND) and 446–467 (LESS…RTDT). A coiled-coil region spans residues 430 to 943 (VIIRQLQDSL…CKKHHQEVIS (514 aa)). Basic and acidic residues predominate over residues 446–457 (LESSEAEKKQLQ). Over residues 458–467 (DELQSQRTDT) the composition is skewed to polar residues. A phosphoserine mark is found at Ser-513, Ser-516, Ser-667, Ser-694, and Ser-914.

Interacts with PALLD. Associates with actin. However, does not bind F-actin directly. In terms of tissue distribution, highly expressed in testis, where it localizes to seminiferous tubules (at protein level). Expressed in ganglion cell layer and in Muller cell fibers of the retina (at protein level). In small intestine highly expressed at the apical and lateral borders of absorptive epithelia (at protein level). In liver highly expressed along the bile canaliculi (at protein level).

It localises to the cytoplasm. It is found in the cytoskeleton. The protein localises to the stress fiber. The protein resides in the cell cortex. Its subcellular location is the cell junction. It localises to the nucleus. Plays a role in actin regulation at the ectoplasmic specialization, a type of cell junction specific to testis. Important for establishment of sperm polarity and normal spermatid adhesion. May also promote integrity of Sertoli cell tight junctions at the blood-testis barrier. The polypeptide is Ankycorbin (Rai14) (Mus musculus (Mouse)).